The following is a 307-amino-acid chain: D-alanine--D-alanine ligase (307 aa).

One can recognise an ATP-grasp domain in the interval 110–299 (KQLWKGAGLP…FDVLVGEILL (190 aa)). An ATP-binding site is contributed by 136–185 (PVIVKPAHEGSSIGMAKADNTEELGEALVAAEKFDQDVLVEAWVNGPEYT). Mg(2+)-binding residues include Asp253, Glu266, and Asn268.

The protein belongs to the D-alanine--D-alanine ligase family. Mg(2+) serves as cofactor. Requires Mn(2+) as cofactor.

The protein localises to the cytoplasm. It carries out the reaction 2 D-alanine + ATP = D-alanyl-D-alanine + ADP + phosphate + H(+). The protein operates within cell wall biogenesis; peptidoglycan biosynthesis. Its function is as follows. Cell wall formation. The chain is D-alanine--D-alanine ligase from Alcanivorax borkumensis (strain ATCC 700651 / DSM 11573 / NCIMB 13689 / SK2).